We begin with the raw amino-acid sequence, 361 residues long: Nuclear pore complex protein NUP43 (361 aa).

Residues Ile51–Ser73 are disordered. WD repeat units lie at residues Phe132–Val173, Asn177–Ser215, and Lys225–Val265.

In terms of assembly, part of the nuclear pore complex (NPC). The NPC has an eight-fold symmetrical structure comprising a central transport channel and two rings, the cytoplasmic and nuclear rings, to which eight filaments are attached. The cytoplasmic filaments have loose ends, while the nuclear filaments are joined in a distal ring, forming a nuclear basket. NPCs are highly dynamic in configuration and composition, and can be devided in 3 subcomplexes, the NUP62 subcomplex, the NUP107-160 subcomplex and the NUP93 subcomplex, containing approximately 30 different nucleoporin proteins.

The protein resides in the nucleus envelope. Its subcellular location is the nucleus. It is found in the nuclear pore complex. In Arabidopsis thaliana (Mouse-ear cress), this protein is Nuclear pore complex protein NUP43.